The chain runs to 20 residues: Unknown protein NF028 from 2D-PAGE (20 aa).

This chain is Unknown protein NF028 from 2D-PAGE, found in Naegleria fowleri (Brain eating amoeba).